The sequence spans 588 residues: Myc box-dependent-interacting protein 1 (588 aa).

Ala-2 is subject to N-acetylalanine. The interval 2 to 122 (AEMGSKGVTA…DYHQKLVDQA (121 aa)) is interaction with BIN2. Coiled coils occupy residues 15-42 (ASNVQKKLTRAQEKVLQKLGKADETKDE) and 193-274 (HLVA…EKQH). The 248-residue stretch at 29 to 276 (VLQKLGKADE…LVSLEKQHGS (248 aa)) folds into the BAR domain. A disordered region spans residues 279–355 (FTVKAQPSDN…PKHTPSKEMK (77 aa)). Residues Ser-296, Ser-298, and Ser-304 each carry the phosphoserine modification. Thr-308 carries the post-translational modification Phosphothreonine. A phosphoserine mark is found at Ser-324 and Ser-332. Positions 379 to 422 (FEAPGPFSEQASLLDLDFEPLPPVASPVKAPTPSGQSIPWDLWE) are clathrin-binding. The segment at 448–484 (PSQTAEPGPAQPAEASEVVGGAQEPGETAASEATSSS) is disordered. Residues 474–484 (ETAASEATSSS) are compositionally biased toward low complexity. In terms of domain architecture, SH3 spans 515-588 (GFMFKVQAQH…FPENFTERVQ (74 aa)).

Heterodimer with AMPH. Binds SH3GLB1. Interacts (via SH3 domain) with DNM1. Interacts with SYNJ1. Interacts (via SH3 domain) with DNM2. Interacts with CLTC. Interacts with AP2A2. Interacts with AP2B1. Interacts with MYC (via N-terminal transactivation domain); the interaction requires the integrity of the conserved MYC box regions 1 and 2. Interacts with BIN2. Interacts with SNX4. Interacts (via BAR domain) with BACE1. Binds (via BAR domain) F-actin. Phosphorylated by protein kinase C. In terms of tissue distribution, isoform 1 is expressed mainly in the brain. Isoform 2 is widely expressed.

The protein resides in the nucleus. It is found in the cytoplasm. Its subcellular location is the endosome. It localises to the cell membrane. The protein localises to the sarcolemma. The protein resides in the T-tubule. In terms of biological role, is a key player in the control of plasma membrane curvature, and membrane shaping and remodeling. Required in muscle cells for the formation of T-tubules, tubular invaginations of the plasma membrane that function in depolarization-contraction coupling. Required in muscle cells for the formation of T-tubules, tubular invaginations of the plasma membrane that function in depolarization-contraction coupling. Is a negative regulator of endocytosis. Is also involved in the regulation of intracellular vesicles sorting, modulation of BACE1 trafficking and the control of amyloid-beta production. In neuronal circuits, endocytosis regulation may influence the internalization of PHF-tau aggregates. May be involved in the regulation of MYC activity and the control cell proliferation. The protein is Myc box-dependent-interacting protein 1 (Bin1) of Mus musculus (Mouse).